The chain runs to 317 residues: Transcription factor elt-3 (317 aa).

A disordered region spans residues 1 to 34; it reads METANYYLPSPPYSSTSSSDSRESRMNTPIPTTY. The GATA-type zinc finger occupies 244 to 268; sequence CSNCKTRETTLWRRNGEGGVECNAC. Residues 290 to 317 form a disordered region; that stretch reads KRNRRPRNESPNSAIRNTHQRHGHAAAC. The span at 307–317 shows a compositional bias: basic residues; the sequence is THQRHGHAAAC.

As to quaternary structure, interacts with skn-1; interaction may enhance transcriptional activation of target genes. As to expression, expressed in head, trunk and tail. Expression decreases with age in the hypodermal cells and the pharyngeal-intestinal valve cells in the head, eventually showing little or no expression in about 14 day old worms. Expressed in hypodermal, but not in intestinal, cells at 1 day of age. Expression in the hypodermal and intestinal cells in the trunk region decreases quickly between day 3 and day 5 of adulthood. Expression in the tail between days 3 and 14 stays approximately uniform.

The protein resides in the nucleus. Functionally, transcription factor. Required, in concert with signal transducer and transcription factor sta-2, for up-regulation of the vacuolar H(+)-ATPase and acceleration of lysosome maturation at molt. Involved in regulating hypodermal development, perhaps acting downstream of transcription factor elt-1. Modulates environmentally induced changes in collagen gene expression, including rol-6, sqt-1, lon-3, and dpy-13. Involved in regulating expression of various genes, including gst-4, sod-3, ugt-9, and col-144. In response to oxidative stress, required to up-regulate expression of gst-4 mRNA. Regulated by the Insulin/IGF-1-like signaling (IIS) mediated pathway. Plays a role in longevity. May regulate the expression of genes that control sensitivity to osmotic stress, in conjunction with the GATA region-binding transcription factor elt-2. May form a transcriptional circuit with GATA factors egl-18 and elt-6. This chain is Transcription factor elt-3, found in Caenorhabditis elegans.